Here is a 397-residue protein sequence, read N- to C-terminus: MTLLNPFFGEFGGMYVPQILIPALLQLEKAFVDAKDDPAFIAEFQTLLTEYAGRPTPLTLTRNLTKGTKTRLYLKREDLLHGGAHKTNQVLGQALLAKRMGKSEIIAETGAGQHGVATALACALLGLKCRVYMGAKDCERQKPNVFRMKLMGATVIPVHSGSSTLKDACNEALRDWAANYESAHYLLGTAAGPHPFPTIVREFQKMIGEEAKAQCFEKEERLPDAVIACVGGGSNAIGMFADFIDEPSVRLIGVEPGGHGIESGEHGAPLGHGSKGVFFGMHSYLMQDTQGQIQESYSVSAGLDFPSVGPQHAHLAAIGRAEYPSVTDKEALDAFQELAKSEGIIPALESSHALAHALKMARSEPEKEQVLIVNLSGRGDKDIFTVADIFEKEGTLS.

Residue lysine 86 is modified to N6-(pyridoxal phosphate)lysine.

The protein belongs to the TrpB family. In terms of assembly, tetramer of two alpha and two beta chains. Pyridoxal 5'-phosphate is required as a cofactor.

The enzyme catalyses (1S,2R)-1-C-(indol-3-yl)glycerol 3-phosphate + L-serine = D-glyceraldehyde 3-phosphate + L-tryptophan + H2O. It participates in amino-acid biosynthesis; L-tryptophan biosynthesis; L-tryptophan from chorismate: step 5/5. Functionally, the beta subunit is responsible for the synthesis of L-tryptophan from indole and L-serine. This is Tryptophan synthase beta chain from Aeromonas hydrophila subsp. hydrophila (strain ATCC 7966 / DSM 30187 / BCRC 13018 / CCUG 14551 / JCM 1027 / KCTC 2358 / NCIMB 9240 / NCTC 8049).